The sequence spans 777 residues: Semaphorin-3D (777 aa).

The N-terminal stretch at Met-1 to Thr-37 is a signal peptide. A Sema domain is found at Arg-44–Leu-531. Residues Cys-117 and Cys-128 are joined by a disulfide bond. Asn-139 carries an N-linked (GlcNAc...) asparagine glycan. 4 disulfide bridges follow: Cys-146/Cys-155, Cys-286/Cys-398, Cys-310/Cys-358, and Cys-534/Cys-552. The PSI domain occupies Arg-533–Trp-585. The Ig-like C2-type domain occupies Ser-592 to Thr-680. Residues Asn-607 and Asn-724 are each glycosylated (N-linked (GlcNAc...) asparagine). Cys-665 and Cys-731 are disulfide-bonded. Residues Arg-740–His-765 show a composition bias toward basic residues. The interval Arg-740 to Thr-777 is disordered. Residues Arg-766–Thr-777 show a composition bias toward basic and acidic residues.

Belongs to the semaphorin family.

The protein localises to the secreted. Its function is as follows. Induces the collapse and paralysis of neuronal growth cones. Could potentially act as repulsive cues toward specific neuronal populations. Binds to neuropilin. The protein is Semaphorin-3D (Sema3d) of Mus musculus (Mouse).